Here is a 461-residue protein sequence, read N- to C-terminus: Ribulose bisphosphate carboxylase (461 aa).

Substrate is bound at residue asparagine 112. The active-site Proton acceptor is lysine 167. Lysine 169 serves as a coordination point for substrate. Residues lysine 192, aspartate 194, and glutamate 195 each contribute to the Mg(2+) site. N6-carboxylysine is present on lysine 192. Histidine 288 serves as the catalytic Proton acceptor. Arginine 289, histidine 322, and serine 369 together coordinate substrate.

The protein belongs to the RuBisCO large chain family. Type II subfamily. Homodimer. The cofactor is Mg(2+).

The enzyme catalyses 2 (2R)-3-phosphoglycerate + 2 H(+) = D-ribulose 1,5-bisphosphate + CO2 + H2O. It catalyses the reaction D-ribulose 1,5-bisphosphate + O2 = 2-phosphoglycolate + (2R)-3-phosphoglycerate + 2 H(+). RuBisCO catalyzes two reactions: the carboxylation of D-ribulose 1,5-bisphosphate, the primary event in carbon dioxide fixation, as well as the oxidative fragmentation of the pentose substrate. Both reactions occur simultaneously and in competition at the same active site. The chain is Ribulose bisphosphate carboxylase from Rhodopseudomonas palustris (strain BisB5).